The following is a 174-amino-acid chain: dCTP deaminase, dUMP-forming (174 aa).

DCTP is bound by residues 93–98 (RSSIGR), aspartate 111, 119–121 (TLE), glutamine 138, and tyrosine 151. Residue glutamate 121 is the Proton donor/acceptor of the active site.

The protein belongs to the dCTP deaminase family. In terms of assembly, homotrimer.

It carries out the reaction dCTP + 2 H2O = dUMP + NH4(+) + diphosphate. The protein operates within pyrimidine metabolism; dUMP biosynthesis; dUMP from dCTP: step 1/1. Its function is as follows. Bifunctional enzyme that catalyzes both the deamination of dCTP to dUTP and the hydrolysis of dUTP to dUMP without releasing the toxic dUTP intermediate. This chain is dCTP deaminase, dUMP-forming, found in Leptospira biflexa serovar Patoc (strain Patoc 1 / Ames).